The chain runs to 210 residues: MDKKKNISMAVIRRLPKYHRYLYELLKNDVDRISSKELSEKIGFTASQIRQDLNCFGDFGQQGYGYNVSELHHQISNILGLNNPYNIIIIGAGNIGQALANYTRFSKLGFNVKAMFDTNPKLIGLKIREIEILDIDYLSSYLEKNNIDIGIICVPHDNAQKVANILVKNDIKGIWNFAPIDLSVPEDVVVENVHLSDSLLTLTCLINKTE.

The segment at residues 17–56 (KYHRYLYELLKNDVDRISSKELSEKIGFTASQIRQDLNCF) is a DNA-binding region (H-T-H motif). 91–96 (GAGNIG) lines the NAD(+) pocket.

Belongs to the transcriptional regulatory Rex family. Homodimer.

It localises to the cytoplasm. Modulates transcription in response to changes in cellular NADH/NAD(+) redox state. This Clostridium botulinum (strain ATCC 19397 / Type A) protein is Redox-sensing transcriptional repressor Rex.